The following is a 308-amino-acid chain: MKITFLGTGAAIPTKYRAHPSISLKFDGEIFLFDCGENTQRQIIFTDVSPMKINNIFITHLHGDHVLGLPGLLQSIAFQGRKKPLNIYGPAETVKMIEHILGVGYHSIDYPINVHEISSKTPERIIFTNNYEVFSYPVVHSVPALAYVFKQVKKPRMDLEKVKKLGIEIGPDLKRLKDGFNVELNGEIITLNDVTLPPKKGICVGYSGDTIPLKEFAEFLKELKCNTLIHEATFDKTMERNAKETLHSTATDALNIAKLSGVSTVLLTHISARYDNLNAFENEIVEFKAENPEIHVLIAEDLMEYSLK.

H60, H62, D64, H65, H140, D209, and H269 together coordinate Zn(2+). D64 (proton acceptor) is an active-site residue.

It belongs to the RNase Z family. Homodimer. Zn(2+) is required as a cofactor.

It carries out the reaction Endonucleolytic cleavage of RNA, removing extra 3' nucleotides from tRNA precursor, generating 3' termini of tRNAs. A 3'-hydroxy group is left at the tRNA terminus and a 5'-phosphoryl group is left at the trailer molecule.. Zinc phosphodiesterase, which displays some tRNA 3'-processing endonuclease activity. Probably involved in tRNA maturation, by removing a 3'-trailer from precursor tRNA. The polypeptide is Ribonuclease Z (Methanococcus maripaludis (strain DSM 14266 / JCM 13030 / NBRC 101832 / S2 / LL)).